The chain runs to 905 residues: MDFPTLSSYLHHHRPGEDILADLHTDPGLGLTAEAVAQRYEQYGRNELKFKPGKPAWLRFLLQFHQPLLYILLIAGTVKAFLGSWTNAWVIWGVTLVNAIIGYIQEAKAEGAIASLAKAVTTEATVLRDGQNLRIPSQDLVIGDIVSLASGDKVPADLRLLKVRNLQVDESALTGEAVPVEKAVELLPEETPLAERLNMAYAGSFVTFGQGTGVVVATANATEMGQISQSMEKQVSLMTPLTRKFAKFSHTLLYVIVTLAAFTFAVGWGRGGSPLEMFEAAVALAVSAIPEGLPAVVTVTLAIGVNRMAKRNAIIRKLPAVEALGSATVVCSDKTGTLTENQMTVQAVYAGGKHYEVSGGGYSPKGEFWQVMGEEVDNVLLDGLPPVLEECLLTGMLCNDSQLEHRGDDWAVVGDPTEGALLASAAKAGFSQAGLASQKPRLDSIPFESDYQYMATLHDGDGRTIYVKGSVESLLQRCESMLLDDGQMVSIDRGEIEENVEDMAQQGLRVLAFAKKTVEPHHHAIDHGDIETGLIFLGLQGMIDPPRPEAIAAVHACHDAGIEVKMITGDHISTAQAIAKRMGIAAEGDGIAFEGRQLATMGPAELAQAAEDSCVFARVAPAQKLQLVEALQEKGHIVAMTGDGVNDAPALKRADIGIAMGKGGTEVARESSDMLLTDDNFASIEAAVEEGRTVYQNLRKAIAFLLPVNGGESMTILISVLLALNLPILSLQVLWLNMINSITMTVPLAFEAKSPGIMQQAPRNPNEPLITKKLLHRILLVSLFNWILIFGMFEWVNRTYDDLALARTMAIQALVAARVIYLLSISQLGRSFLGYVTGKRQTITKASILLLGIAVAIALQIGFSQLPFMNVLFKTAPMDWQQWAICLLPMIPMVPVAILANRLDP.

Helical transmembrane passes span 60-80 (FLLQFHQPLLYILLIAGTVKA), 81-101 (FLGSWTNAWVIWGVTLVNAII), 248-268 (FSHTLLYVIVTLAAFTFAVGW), and 283-303 (ALAVSAIPEGLPAVVTVTLAI). D333 functions as the 4-aspartylphosphate intermediate in the catalytic mechanism. A run of 5 helical transmembrane segments spans residues 716-736 (ILISVLLALNLPILSLQVLWL), 774-794 (LLHRILLVSLFNWILIFGMFE), 809-829 (MAIQALVAARVIYLLSISQLG), 848-868 (ILLLGIAVAIALQIGFSQLPF), and 880-900 (WQQWAICLLPMIPMVPVAILA).

It belongs to the cation transport ATPase (P-type) (TC 3.A.3) family. Type IIA subfamily.

The protein localises to the cell membrane. It catalyses the reaction ATP + H2O = ADP + phosphate + H(+). Functionally, could mediate calcium influx. The polypeptide is Cation-transporting ATPase pma1 (pma1) (Synechocystis sp. (strain ATCC 27184 / PCC 6803 / Kazusa)).